The primary structure comprises 452 residues: Cholesterol 7-desaturase nvd 2 (452 aa).

2 helical membrane passes run 6-26 and 32-52; these read LIRI…MGLC and FPVM…ALVM. The region spanning 107-212 is the Rieske domain; that stretch reads WFKVADSTWI…CCEVDGMAYL (106 aa). [2Fe-2S] cluster is bound by residues Cys148, His150, Cys169, and His172.

This sequence belongs to the cholesterol 7-desaturase family. Requires [2Fe-2S] cluster as cofactor.

It localises to the membrane. The enzyme catalyses cholesterol + NADPH + O2 + H(+) = 7-dehydrocholesterol + NADP(+) + 2 H2O. It carries out the reaction cholesterol + NADH + O2 + H(+) = 7-dehydrocholesterol + NAD(+) + 2 H2O. It functions in the pathway steroid hormone biosynthesis; dafachronic acid biosynthesis. In terms of biological role, catalyzes the production of 7-dehydrocholesterol (7-DHC or cholesta-5,7-dien-3beta-ol) by inserting a double bond (desaturating) at the C7-C8 single bond of cholesterol. Essential regulator of steroid biosynthesis as this reaction is the first step in the synthesis of the steroid hormone Delta(7)-dafachronic acid. This chain is Cholesterol 7-desaturase nvd 2, found in Ciona intestinalis (Transparent sea squirt).